Reading from the N-terminus, the 351-residue chain is Farnesyl pyrophosphate synthase (351 aa).

Residues lysine 51, arginine 54, and glutamine 92 each contribute to the isopentenyl diphosphate site. Residues aspartate 99 and aspartate 103 each coordinate Mg(2+). Position 108 (arginine 108) interacts with dimethylallyl diphosphate. Arginine 109 is a binding site for isopentenyl diphosphate. Dimethylallyl diphosphate contacts are provided by lysine 196, threonine 197, glutamine 236, lysine 253, and lysine 262.

This sequence belongs to the FPP/GGPP synthase family. The cofactor is Mg(2+).

It carries out the reaction isopentenyl diphosphate + dimethylallyl diphosphate = (2E)-geranyl diphosphate + diphosphate. The catalysed reaction is isopentenyl diphosphate + (2E)-geranyl diphosphate = (2E,6E)-farnesyl diphosphate + diphosphate. The protein operates within isoprenoid biosynthesis; farnesyl diphosphate biosynthesis; farnesyl diphosphate from geranyl diphosphate and isopentenyl diphosphate: step 1/1. It functions in the pathway isoprenoid biosynthesis; geranyl diphosphate biosynthesis; geranyl diphosphate from dimethylallyl diphosphate and isopentenyl diphosphate: step 1/1. Farnesyl pyrophosphate synthase; part of the second module of ergosterol biosynthesis pathway that includes the middle steps of the pathway. ERG20 catalyzes the sequential condensation of isopentenyl pyrophosphate with dimethylallyl pyrophosphate, and then with the resultant geranylpyrophosphate to the ultimate product farnesyl pyrophosphate. The second module is carried out in the vacuole and involves the formation of farnesyl diphosphate, which is also an important intermediate in the biosynthesis of ubiquinone, dolichol, heme and prenylated proteins. Activity by the mevalonate kinase ERG12 first converts mevalonate into 5-phosphomevalonate. 5-phosphomevalonate is then further converted to 5-diphosphomevalonate by the phosphomevalonate kinase ERG8. The diphosphomevalonate decarboxylase MVD then produces isopentenyl diphosphate. The isopentenyl-diphosphate delta-isomerase IDI1 then catalyzes the 1,3-allylic rearrangement of the homoallylic substrate isopentenyl (IPP) to its highly electrophilic allylic isomer, dimethylallyl diphosphate (DMAPP). Finally the farnesyl diphosphate synthase ERG20 catalyzes the sequential condensation of isopentenyl pyrophosphate with dimethylallyl pyrophosphate, and then with the resultant geranylpyrophosphate to the ultimate product farnesyl pyrophosphate. This chain is Farnesyl pyrophosphate synthase, found in Candida albicans (strain SC5314 / ATCC MYA-2876) (Yeast).